The primary structure comprises 364 residues: Uroporphyrinogen decarboxylase (364 aa).

Residues 28–32 (RQAGR), Asp78, Tyr160, Thr215, and His333 contribute to the substrate site.

The protein belongs to the uroporphyrinogen decarboxylase family. As to quaternary structure, homodimer.

The protein localises to the cytoplasm. The catalysed reaction is uroporphyrinogen III + 4 H(+) = coproporphyrinogen III + 4 CO2. It functions in the pathway porphyrin-containing compound metabolism; protoporphyrin-IX biosynthesis; coproporphyrinogen-III from 5-aminolevulinate: step 4/4. Catalyzes the decarboxylation of four acetate groups of uroporphyrinogen-III to yield coproporphyrinogen-III. The sequence is that of Uroporphyrinogen decarboxylase from Burkholderia pseudomallei (strain 1106a).